A 319-amino-acid chain; its full sequence is Acetyl-coenzyme A carboxylase carboxyl transferase subunit alpha (319 aa).

In terms of domain architecture, CoA carboxyltransferase C-terminal spans 39–296; it reads EINRLRSKSI…KTQLLLDLTE (258 aa).

It belongs to the AccA family. In terms of assembly, acetyl-CoA carboxylase is a heterohexamer composed of biotin carboxyl carrier protein (AccB), biotin carboxylase (AccC) and two subunits each of ACCase subunit alpha (AccA) and ACCase subunit beta (AccD).

Its subcellular location is the cytoplasm. The enzyme catalyses N(6)-carboxybiotinyl-L-lysyl-[protein] + acetyl-CoA = N(6)-biotinyl-L-lysyl-[protein] + malonyl-CoA. It functions in the pathway lipid metabolism; malonyl-CoA biosynthesis; malonyl-CoA from acetyl-CoA: step 1/1. Functionally, component of the acetyl coenzyme A carboxylase (ACC) complex. First, biotin carboxylase catalyzes the carboxylation of biotin on its carrier protein (BCCP) and then the CO(2) group is transferred by the carboxyltransferase to acetyl-CoA to form malonyl-CoA. This Blochmanniella pennsylvanica (strain BPEN) protein is Acetyl-coenzyme A carboxylase carboxyl transferase subunit alpha.